The chain runs to 295 residues: Nucleotide-binding protein MCA0739 (295 aa).

ATP is bound at residue 8–15 (GFSGSGKS). 60–63 (DARN) provides a ligand contact to GTP.

It belongs to the RapZ-like family.

Its function is as follows. Displays ATPase and GTPase activities. The sequence is that of Nucleotide-binding protein MCA0739 from Methylococcus capsulatus (strain ATCC 33009 / NCIMB 11132 / Bath).